Reading from the N-terminus, the 185-residue chain is Large ribosomal subunit protein uL5 (185 aa).

It belongs to the universal ribosomal protein uL5 family. In terms of assembly, part of the 50S ribosomal subunit; part of the 5S rRNA/L5/L18/L25 subcomplex. Contacts the 5S rRNA and the P site tRNA. Forms a bridge to the 30S subunit in the 70S ribosome.

In terms of biological role, this is one of the proteins that bind and probably mediate the attachment of the 5S RNA into the large ribosomal subunit, where it forms part of the central protuberance. In the 70S ribosome it contacts protein S13 of the 30S subunit (bridge B1b), connecting the 2 subunits; this bridge is implicated in subunit movement. Contacts the P site tRNA; the 5S rRNA and some of its associated proteins might help stabilize positioning of ribosome-bound tRNAs. The polypeptide is Large ribosomal subunit protein uL5 (Bradyrhizobium sp. (strain BTAi1 / ATCC BAA-1182)).